The chain runs to 119 residues: Large ribosomal subunit protein bL20 (119 aa).

Belongs to the bacterial ribosomal protein bL20 family.

Binds directly to 23S ribosomal RNA and is necessary for the in vitro assembly process of the 50S ribosomal subunit. It is not involved in the protein synthesizing functions of that subunit. The sequence is that of Large ribosomal subunit protein bL20 from Acidovorax sp. (strain JS42).